Consider the following 333-residue polypeptide: CMP-N-acetylneuraminate-beta-galactosamide-alpha-2,3-sialyltransferase 4 (333 aa).

The Cytoplasmic portion of the chain corresponds to 1–8; sequence MTSKSHWK. A helical; Signal-anchor for type II membrane protein transmembrane segment spans residues 9–26; the sequence is LLALALVLVVVMVWYSIS. Topologically, residues 27–333 are lumenal; the sequence is REDRYIEFFY…MGAVKNLTYF (307 aa). N-linked (GlcNAc...) asparagine glycosylation is found at Asn61, Asn131, Asn310, and Asn329. The cysteines at positions 120 and 273 are disulfide-linked.

This sequence belongs to the glycosyltransferase 29 family.

It is found in the golgi apparatus. Its subcellular location is the golgi stack membrane. It carries out the reaction a beta-D-galactosyl-(1-&gt;3)-N-acetyl-beta-D-galactosaminyl derivative + CMP-N-acetyl-beta-neuraminate = an N-acetyl-alpha-neuraminyl-(2-&gt;3)-beta-D-galactosyl-(1-&gt;3)-N-acetyl-beta-D-galactosaminyl derivative + CMP + H(+). The enzyme catalyses a beta-D-galactosyl-(1-&gt;3)-N-acetyl-alpha-D-galactosaminyl derivative + CMP-N-acetyl-beta-neuraminate = an N-acetyl-alpha-neuraminyl-(2-&gt;3)-beta-D-galactosyl-(1-&gt;3)-N-acetyl-alpha-D-galactosaminyl derivative + CMP + H(+). The catalysed reaction is a beta-D-galactosyl-(1-&gt;4)-N-acetyl-beta-D-glucosaminyl derivative + CMP-N-acetyl-beta-neuraminate = an N-acetyl-alpha-neuraminyl-(2-&gt;3)-beta-D-galactosyl-(1-&gt;4)-N-acetyl-beta-D-glucosaminyl derivative + CMP + H(+). It catalyses the reaction a ganglioside GM1 (d18:1(4E)) + CMP-N-acetyl-beta-neuraminate = a ganglioside GD1a (d18:1(4E)) + CMP + H(+). It carries out the reaction a ganglioside GA1 (d18:1(4E)) + CMP-N-acetyl-beta-neuraminate = a ganglioside GM1b (d18:1(4E)) + CMP + H(+). The enzyme catalyses a ganglioside GT1c (d18:1(4E)) + CMP-N-acetyl-beta-neuraminate = a ganglioside GQ1c (d18:1(4E)) + CMP + H(+). The catalysed reaction is a neolactoside nLc4Cer + CMP-N-acetyl-beta-neuraminate = a neolactoside IV(3)-alpha-NeuAc-nLc4Cer + CMP + H(+). It catalyses the reaction a neolactoside nLc4Cer(d18:1(4E)) + CMP-N-acetyl-beta-neuraminate = a neolactoside IV(3)-alpha-NeuAc-nLc4Cer(d18:1(4E)) + CMP + H(+). The protein operates within protein modification; protein glycosylation. Its pathway is glycolipid biosynthesis. Functionally, a beta-galactoside alpha2-3 sialyltransferase involved in terminal sialylation of glycoproteins and glycolipids. Catalyzes the transfer of sialic acid (N-acetyl-neuraminic acid; Neu5Ac) from the nucleotide sugar donor CMP-Neu5Ac onto acceptor Galbeta-(1-&gt;3)-GalNAc- and Galbeta-(1-&gt;4)-GlcNAc-terminated glycoconjugates through an alpha2-3 linkage. Plays a major role in hemostasis. Responsible for sialylation of plasma VWF/von Willebrand factor, preventing its recognition by asialoglycoprotein receptors (ASGPR) and subsequent clearance. Regulates ASGPR-mediated clearance of platelets. Participates in the biosynthesis of the sialyl Lewis X epitopes, both on O- and N-glycans, which are recognized by SELE/E-selectin, SELP/P-selectin and SELL/L-selectin. Essential for selectin-mediated rolling and adhesion of leukocytes during extravasation. Contributes to adhesion and transendothelial migration of neutrophils likely through terminal sialylation of CXCR2. In glycosphingolipid biosynthesis, sialylates GM1 and GA1 gangliosides to form GD1a and GM1b, respectively. Metabolizes brain c-series ganglioside GT1c forming GQ1c. Synthesizes ganglioside LM1 (IV3Neu5Ac-nLc4Cer), a major structural component of peripheral nerve myelin. In Rattus norvegicus (Rat), this protein is CMP-N-acetylneuraminate-beta-galactosamide-alpha-2,3-sialyltransferase 4 (St3gal4).